The following is a 287-amino-acid chain: Ribonuclease Z (287 aa).

Zn(2+) is bound by residues His64, His66, Asp68, His69, His124, Asp191, and His250. Asp68 functions as the Proton acceptor in the catalytic mechanism.

It belongs to the RNase Z family. Homodimer. It depends on Zn(2+) as a cofactor.

The enzyme catalyses Endonucleolytic cleavage of RNA, removing extra 3' nucleotides from tRNA precursor, generating 3' termini of tRNAs. A 3'-hydroxy group is left at the tRNA terminus and a 5'-phosphoryl group is left at the trailer molecule.. In terms of biological role, zinc phosphodiesterase, which displays some tRNA 3'-processing endonuclease activity. Probably involved in tRNA maturation, by removing a 3'-trailer from precursor tRNA. This chain is Ribonuclease Z, found in Pyrobaculum neutrophilum (strain DSM 2338 / JCM 9278 / NBRC 100436 / V24Sta) (Thermoproteus neutrophilus).